Consider the following 225-residue polypeptide: Zinc finger protein 22 (225 aa).

A disordered region spans residues 1–35; the sequence is MRLGKPKGGISRSSSQGKVYENQRKTGRQRQRWGM. K18 is subject to N6-acetyllysine. 5 consecutive C2H2-type zinc fingers follow at residues 55–77, 83–105, 111–133, 139–161, and 167–189; these read YKCV…QKIH, HKCA…RRVH, YRCD…QRIH, YQCD…QRTH, and YQCS…TKVH. The tract at residues 183–225 is disordered; sequence RQHTKVHEEEKPRKTRGRSLRAKTHSLSSWKAGKGRRSAAGLR. Residues 195–206 show a composition bias toward basic residues; it reads RKTRGRSLRAKT.

It belongs to the krueppel C2H2-type zinc-finger protein family.

The protein localises to the nucleus. Functionally, binds DNA through the consensus sequence 5'-CAATG-3'. May be involved in transcriptional regulation and may play a role in tooth formation. In Bos taurus (Bovine), this protein is Zinc finger protein 22 (ZNF22).